Reading from the N-terminus, the 346-residue chain is Dihydroorotase (346 aa).

Residues His14 and His16 each contribute to the Zn(2+) site. Residues 16–18 (HLR) and Asn42 each bind substrate. Zn(2+) is bound by residues Lys100, His137, and His175. The residue at position 100 (Lys100) is an N6-carboxylysine. Position 137 (His137) interacts with substrate. Leu220 provides a ligand contact to substrate. Position 248 (Asp248) interacts with Zn(2+). Residue Asp248 is part of the active site. The substrate site is built by His252 and Ala264.

This sequence belongs to the metallo-dependent hydrolases superfamily. DHOase family. Class II DHOase subfamily. In terms of assembly, homodimer. Zn(2+) serves as cofactor.

It catalyses the reaction (S)-dihydroorotate + H2O = N-carbamoyl-L-aspartate + H(+). It participates in pyrimidine metabolism; UMP biosynthesis via de novo pathway; (S)-dihydroorotate from bicarbonate: step 3/3. Functionally, catalyzes the reversible cyclization of carbamoyl aspartate to dihydroorotate. This Cereibacter sphaeroides (strain ATCC 17025 / ATH 2.4.3) (Rhodobacter sphaeroides) protein is Dihydroorotase.